The sequence spans 318 residues: tRNA dimethylallyltransferase (318 aa).

21 to 28 (GPTATGKS) provides a ligand contact to ATP. 23 to 28 (TATGKS) is a binding site for substrate. The interval 46-49 (DSMQ) is interaction with substrate tRNA.

Belongs to the IPP transferase family. In terms of assembly, monomer. It depends on Mg(2+) as a cofactor.

The catalysed reaction is adenosine(37) in tRNA + dimethylallyl diphosphate = N(6)-dimethylallyladenosine(37) in tRNA + diphosphate. Its function is as follows. Catalyzes the transfer of a dimethylallyl group onto the adenine at position 37 in tRNAs that read codons beginning with uridine, leading to the formation of N6-(dimethylallyl)adenosine (i(6)A). The protein is tRNA dimethylallyltransferase of Acidothermus cellulolyticus (strain ATCC 43068 / DSM 8971 / 11B).